The sequence spans 2273 residues: Acetyl-CoA carboxylase, mitochondrial (2273 aa).

The transit peptide at 1–104 (KGKTITHGQS…RGNIHKHTRL (104 aa)) directs the protein to the mitochondrion. The 502-residue stretch at 134–635 (VISKILIANN…STGWLDDLIL (502 aa)) folds into the Biotin carboxylation domain. An ATP-grasp domain is found at 292–484 (KTNFVSVPDD…LPATQLQIAM (193 aa)). 332–337 (GGGGKG) is a binding site for ATP. Residue Arg459 is part of the active site. The region spanning 763–837 (LEAELNPTQV…EAGDVIAKLT (75 aa)) is the Biotinyl-binding domain. Lys804 is subject to N6-biotinyllysine. One can recognise a CoA carboxyltransferase N-terminal domain in the interval 1532-1867 (PYSVKDWLQP…KRDMSPPLLE (336 aa)). Residues 1532–2187 (PYSVKDWLQP…EGQVIKRLQK (656 aa)) form a carboxyltransferase region. Positions 1776, 2080, and 2082 each coordinate CoA. The CoA carboxyltransferase C-terminal domain occupies 1871–2187 (RWDRDVDFKP…EGQVIKRLQK (317 aa)).

The cofactor is biotin.

It localises to the mitochondrion. The catalysed reaction is hydrogencarbonate + acetyl-CoA + ATP = malonyl-CoA + ADP + phosphate + H(+). It carries out the reaction N(6)-biotinyl-L-lysyl-[protein] + hydrogencarbonate + ATP = N(6)-carboxybiotinyl-L-lysyl-[protein] + ADP + phosphate + H(+). The protein operates within lipid metabolism; malonyl-CoA biosynthesis; malonyl-CoA from acetyl-CoA: step 1/1. Its function is as follows. Catalyzes the rate-limiting reaction in the mitochondrial fatty acid synthesis (FAS) type II pathway. Responsible for the production of the mitochondrial malonyl-CoA, used for the biosynthesis of the cofactor lipoic acid. This protein carries three functions: biotin carboxyl carrier protein, biotin carboxylase, and carboxyltransferase. The protein is Acetyl-CoA carboxylase, mitochondrial (HFA1) of Saccharomyces cerevisiae (strain ATCC 204508 / S288c) (Baker's yeast).